The chain runs to 109 residues: UPF0482 protein ESA_01750 (109 aa).

The signal sequence occupies residues 1 to 24 (MNKFLRHSLLLALLTGALSGVANA). Residues 38 to 55 (RTRQDAAMDKEQWNDTRS) are compositionally biased toward basic and acidic residues. The interval 38–63 (RTRQDAAMDKEQWNDTRSLRQKVNKR) is disordered.

It belongs to the UPF0482 family.

The protein is UPF0482 protein ESA_01750 of Cronobacter sakazakii (strain ATCC BAA-894) (Enterobacter sakazakii).